A 417-amino-acid chain; its full sequence is Serine/threonine-protein kinase PkaB (417 aa).

A Protein kinase domain is found at 9–270; sequence YTAHQILGRG…ELSARLRELL (262 aa). Residues 15–23 and K36 each bind ATP; that span reads LGRGSAGTV. D130 (proton acceptor) is an active-site residue. Disordered stretches follow at residues 279 to 371 and 395 to 417; these read LDVD…RAAT and LATG…PAAP. The segment covering 280 to 293 has biased composition (acidic residues); it reads DVDEPDAEQPEDAP. Low complexity-rich tracts occupy residues 294–308 and 349–368; these read DASA…STAE and GTAR…ARNR. Polar residues predominate over residues 408-417; it reads DTRNSAPAAP.

It belongs to the protein kinase superfamily. Ser/Thr protein kinase family. Autophosphorylated mainly at Thr.

It catalyses the reaction L-seryl-[protein] + ATP = O-phospho-L-seryl-[protein] + ADP + H(+). It carries out the reaction L-threonyl-[protein] + ATP = O-phospho-L-threonyl-[protein] + ADP + H(+). The chain is Serine/threonine-protein kinase PkaB (pkaB) from Streptomyces coelicolor (strain ATCC BAA-471 / A3(2) / M145).